A 71-amino-acid chain; its full sequence is Prokaryotic ubiquitin-like protein Pup (71 aa).

The span at 1–18 shows a compositional bias: basic and acidic residues; it reads MPEKDTGGQHRATRRTEE. Residues 1-36 form a disordered region; sequence MPEKDTGGQHRATRRTEEHDETIDEATATSDVQERR. Residues 27–65 are ARC ATPase binding; it reads TATSDVQERREKLDADVDAILDEIDDVLEENAEEFVRSY. Residues 30-59 are a coiled coil; it reads SDVQERREKLDADVDAILDEIDDVLEENAE. Glutamate 71 is covalently cross-linked (Isoglutamyl lysine isopeptide (Glu-Lys) (interchain with K-? in acceptor proteins)).

This sequence belongs to the prokaryotic ubiquitin-like protein family. As to quaternary structure, strongly interacts with the proteasome-associated ATPase ARC through a hydrophobic interface; the interacting region of Pup lies in its C-terminal half. There is one Pup binding site per ARC hexamer ring.

It functions in the pathway protein degradation; proteasomal Pup-dependent pathway. Protein modifier that is covalently attached to lysine residues of substrate proteins, thereby targeting them for proteasomal degradation. The tagging system is termed pupylation. This chain is Prokaryotic ubiquitin-like protein Pup, found in Acidothermus cellulolyticus (strain ATCC 43068 / DSM 8971 / 11B).